A 382-amino-acid chain; its full sequence is ATP phosphoribosyltransferase regulatory subunit (382 aa).

It belongs to the class-II aminoacyl-tRNA synthetase family. HisZ subfamily. As to quaternary structure, heteromultimer composed of HisG and HisZ subunits.

The protein resides in the cytoplasm. It functions in the pathway amino-acid biosynthesis; L-histidine biosynthesis; L-histidine from 5-phospho-alpha-D-ribose 1-diphosphate: step 1/9. Functionally, required for the first step of histidine biosynthesis. May allow the feedback regulation of ATP phosphoribosyltransferase activity by histidine. The polypeptide is ATP phosphoribosyltransferase regulatory subunit (Burkholderia multivorans (strain ATCC 17616 / 249)).